We begin with the raw amino-acid sequence, 81 residues long: Putative membrane protein insertion efficiency factor (81 aa).

Positions 61-81 (NDGGYDPVPPAPSSRTSSIAE) are disordered.

It belongs to the UPF0161 family.

The protein resides in the cell inner membrane. Functionally, could be involved in insertion of integral membrane proteins into the membrane. The sequence is that of Putative membrane protein insertion efficiency factor from Pseudomonas putida (strain ATCC 47054 / DSM 6125 / CFBP 8728 / NCIMB 11950 / KT2440).